A 190-amino-acid chain; its full sequence is Probable molybdenum cofactor guanylyltransferase (190 aa).

GTP contacts are provided by residues 9 to 11 (LCG), lysine 21, aspartate 65, and aspartate 94. Aspartate 94 contributes to the Mg(2+) binding site.

This sequence belongs to the MobA family. Mg(2+) serves as cofactor.

It localises to the cytoplasm. It catalyses the reaction Mo-molybdopterin + GTP + H(+) = Mo-molybdopterin guanine dinucleotide + diphosphate. Transfers a GMP moiety from GTP to Mo-molybdopterin (Mo-MPT) cofactor (Moco or molybdenum cofactor) to form Mo-molybdopterin guanine dinucleotide (Mo-MGD) cofactor. The polypeptide is Probable molybdenum cofactor guanylyltransferase (Flavobacterium johnsoniae (strain ATCC 17061 / DSM 2064 / JCM 8514 / BCRC 14874 / CCUG 350202 / NBRC 14942 / NCIMB 11054 / UW101) (Cytophaga johnsonae)).